Consider the following 411-residue polypeptide: Endo-1,4-beta-xylanase A (411 aa).

The first 33 residues, 1 to 33 (MKKFKIRKLMARVLALALVFSTFFMVSKVDANA), serve as a signal peptide directing secretion. One can recognise a GH10 domain in the interval 34-382 (ASYNLMETYG…KPAYDEVVKA (349 aa)). The Proton donor role is filled by glutamate 201. The active-site Nucleophile is the glutamate 311. Residues 387–411 (FGNPGSFTPQPTITPQPTPTPSGQT) form a disordered region. Pro residues predominate over residues 398–411 (TITPQPTPTPSGQT).

Belongs to the glycosyl hydrolase 10 (cellulase F) family.

It catalyses the reaction Endohydrolysis of (1-&gt;4)-beta-D-xylosidic linkages in xylans.. It functions in the pathway glycan degradation; xylan degradation. In terms of biological role, b.fibrisolvens is located in the rumen of ruminant animals, where it contributes to the animal's digestion of plant material by hydrolyzing hemicellulose with its xylanases. This chain is Endo-1,4-beta-xylanase A (xynA), found in Butyrivibrio fibrisolvens.